Here is a 218-residue protein sequence, read N- to C-terminus: Phosphoribosylformylglycinamidine synthase subunit PurQ (218 aa).

Residues 2–218 form the Glutamine amidotransferase type-1 domain; sequence TIGIVVFPGS…IKILQALLSN (217 aa). Cysteine 86 (nucleophile) is an active-site residue. Active-site residues include histidine 194 and glutamate 196.

As to quaternary structure, part of the FGAM synthase complex composed of 1 PurL, 1 PurQ and 2 PurS subunits.

It is found in the cytoplasm. It catalyses the reaction N(2)-formyl-N(1)-(5-phospho-beta-D-ribosyl)glycinamide + L-glutamine + ATP + H2O = 2-formamido-N(1)-(5-O-phospho-beta-D-ribosyl)acetamidine + L-glutamate + ADP + phosphate + H(+). The enzyme catalyses L-glutamine + H2O = L-glutamate + NH4(+). It participates in purine metabolism; IMP biosynthesis via de novo pathway; 5-amino-1-(5-phospho-D-ribosyl)imidazole from N(2)-formyl-N(1)-(5-phospho-D-ribosyl)glycinamide: step 1/2. Part of the phosphoribosylformylglycinamidine synthase complex involved in the purines biosynthetic pathway. Catalyzes the ATP-dependent conversion of formylglycinamide ribonucleotide (FGAR) and glutamine to yield formylglycinamidine ribonucleotide (FGAM) and glutamate. The FGAM synthase complex is composed of three subunits. PurQ produces an ammonia molecule by converting glutamine to glutamate. PurL transfers the ammonia molecule to FGAR to form FGAM in an ATP-dependent manner. PurS interacts with PurQ and PurL and is thought to assist in the transfer of the ammonia molecule from PurQ to PurL. The polypeptide is Phosphoribosylformylglycinamidine synthase subunit PurQ (Prochlorococcus marinus (strain SARG / CCMP1375 / SS120)).